We begin with the raw amino-acid sequence, 150 residues long: Large ribosomal subunit protein bL9 (150 aa).

It belongs to the bacterial ribosomal protein bL9 family.

Functionally, binds to the 23S rRNA. The chain is Large ribosomal subunit protein bL9 from Wigglesworthia glossinidia brevipalpis.